The following is a 652-amino-acid chain: ATP-dependent RNA helicase DDX51 (652 aa).

Positions 1-145 (MALFTINRYL…KAEKAEELTS (145 aa)) are disordered. A compositionally biased stretch (low complexity) spans 25–34 (KALLAKLQKQ). Basic and acidic residues-rich tracts occupy residues 66–77 (LQETKGKIKKSE) and 107–122 (VIVK…EKSV). Residues 212–220 (FFPVQAEVI) carry the Q motif motif. One can recognise a Helicase ATP-binding domain in the interval 234-442 (GPGGYRPRDV…LLDLHQPRLF (209 aa)). 247–254 (APTGSGKT) provides a ligand contact to ATP. Residues 362-365 (DEAD) carry the DEAD box motif. In terms of domain architecture, Helicase C-terminal spans 480–626 (IILHFLLRLK…KQHVHPEALK (147 aa)).

The protein belongs to the DEAD box helicase family. DDX51/DBP6 subfamily.

It localises to the nucleus. Its subcellular location is the nucleolus. It catalyses the reaction ATP + H2O = ADP + phosphate + H(+). Its function is as follows. ATP-binding RNA helicase involved in the biogenesis of 60S ribosomal subunits. The chain is ATP-dependent RNA helicase DDX51 (ddx51) from Danio rerio (Zebrafish).